The primary structure comprises 469 residues: Argininosuccinate lyase (469 aa).

The protein belongs to the lyase 1 family. Argininosuccinate lyase subfamily.

Its subcellular location is the cytoplasm. It carries out the reaction 2-(N(omega)-L-arginino)succinate = fumarate + L-arginine. It functions in the pathway amino-acid biosynthesis; L-arginine biosynthesis; L-arginine from L-ornithine and carbamoyl phosphate: step 3/3. This Polaromonas naphthalenivorans (strain CJ2) protein is Argininosuccinate lyase.